A 335-amino-acid polypeptide reads, in one-letter code: Fructose-1,6-bisphosphatase class 1 (335 aa).

Mg(2+) contacts are provided by Glu90, Asp113, Leu115, and Asp116. Residues 116 to 119 (DGSS), Asn209, Tyr242, and Lys272 each bind substrate. Glu278 is a Mg(2+) binding site.

Belongs to the FBPase class 1 family. Homotetramer. Requires Mg(2+) as cofactor.

It is found in the cytoplasm. The catalysed reaction is beta-D-fructose 1,6-bisphosphate + H2O = beta-D-fructose 6-phosphate + phosphate. It participates in carbohydrate biosynthesis; gluconeogenesis. This chain is Fructose-1,6-bisphosphatase class 1, found in Mannheimia succiniciproducens (strain KCTC 0769BP / MBEL55E).